The sequence spans 950 residues: Glycine dehydrogenase (decarboxylating) (950 aa).

Lysine 698 is modified (N6-(pyridoxal phosphate)lysine).

This sequence belongs to the GcvP family. As to quaternary structure, the glycine cleavage system is composed of four proteins: P, T, L and H. It depends on pyridoxal 5'-phosphate as a cofactor.

The enzyme catalyses N(6)-[(R)-lipoyl]-L-lysyl-[glycine-cleavage complex H protein] + glycine + H(+) = N(6)-[(R)-S(8)-aminomethyldihydrolipoyl]-L-lysyl-[glycine-cleavage complex H protein] + CO2. Its function is as follows. The glycine cleavage system catalyzes the degradation of glycine. The P protein binds the alpha-amino group of glycine through its pyridoxal phosphate cofactor; CO(2) is released and the remaining methylamine moiety is then transferred to the lipoamide cofactor of the H protein. The chain is Glycine dehydrogenase (decarboxylating) from Neisseria meningitidis serogroup C (strain 053442).